We begin with the raw amino-acid sequence, 123 residues long: Ribosome-binding factor A (123 aa).

The protein belongs to the RbfA family. Monomer. Binds 30S ribosomal subunits, but not 50S ribosomal subunits or 70S ribosomes.

It is found in the cytoplasm. Its function is as follows. One of several proteins that assist in the late maturation steps of the functional core of the 30S ribosomal subunit. Associates with free 30S ribosomal subunits (but not with 30S subunits that are part of 70S ribosomes or polysomes). Required for efficient processing of 16S rRNA. May interact with the 5'-terminal helix region of 16S rRNA. The chain is Ribosome-binding factor A from Solibacter usitatus (strain Ellin6076).